The primary structure comprises 261 residues: Cytochrome c oxidase subunit 3 (261 aa).

Topologically, residues 1 to 15 (MTNQLHPFHMTNPSP) are mitochondrial matrix. Residues 16 to 34 (WPLTGATAALLMTSGLIMW) form a helical membrane-spanning segment. Over 35–40 (FHYNSS) the chain is Mitochondrial intermembrane. Residues 41–66 (QLIMLGLLIMLLTLTQWWRDIVREST) form a helical membrane-spanning segment. The Mitochondrial matrix portion of the chain corresponds to 67–72 (FQGHHT). Residues 73-105 (PSVQNNLRYGMILFITSEILFFTGFFWAFYHSS) form a helical membrane-spanning segment. Residues 106-128 (LSPTAELGNIWPPTGITPLNPFE) lie on the Mitochondrial intermembrane side of the membrane. Residues 129–152 (VPLLNTAVLLASGVTITWAHHSLM) traverse the membrane as a helical segment. The Mitochondrial matrix portion of the chain corresponds to 153-155 (EGN). Residues 156–183 (RPQTLQALTLTIILGTYFTILQAMEYFE) traverse the membrane as a helical segment. The Mitochondrial intermembrane portion of the chain corresponds to 184–190 (ASFTIAD). Residues 191–223 (SIYGSTFFVATGFHGLHVIIGSTFLIVCLMRQL) form a helical membrane-spanning segment. Topologically, residues 224–232 (KYHFTSHHH) are mitochondrial matrix. A helical transmembrane segment spans residues 233-256 (FGFEAAAWYWHFVDVIWLFLYLSI). Residues 257–261 (YWWGS) are Mitochondrial intermembrane-facing.

It belongs to the cytochrome c oxidase subunit 3 family. Component of the cytochrome c oxidase (complex IV, CIV), a multisubunit enzyme composed of 14 subunits. The complex is composed of a catalytic core of 3 subunits MT-CO1, MT-CO2 and MT-CO3, encoded in the mitochondrial DNA, and 11 supernumerary subunits COX4I, COX5A, COX5B, COX6A, COX6B, COX6C, COX7A, COX7B, COX7C, COX8 and NDUFA4, which are encoded in the nuclear genome. The complex exists as a monomer or a dimer and forms supercomplexes (SCs) in the inner mitochondrial membrane with NADH-ubiquinone oxidoreductase (complex I, CI) and ubiquinol-cytochrome c oxidoreductase (cytochrome b-c1 complex, complex III, CIII), resulting in different assemblies (supercomplex SCI(1)III(2)IV(1) and megacomplex MCI(2)III(2)IV(2)).

It localises to the mitochondrion inner membrane. The catalysed reaction is 4 Fe(II)-[cytochrome c] + O2 + 8 H(+)(in) = 4 Fe(III)-[cytochrome c] + 2 H2O + 4 H(+)(out). Functionally, component of the cytochrome c oxidase, the last enzyme in the mitochondrial electron transport chain which drives oxidative phosphorylation. The respiratory chain contains 3 multisubunit complexes succinate dehydrogenase (complex II, CII), ubiquinol-cytochrome c oxidoreductase (cytochrome b-c1 complex, complex III, CIII) and cytochrome c oxidase (complex IV, CIV), that cooperate to transfer electrons derived from NADH and succinate to molecular oxygen, creating an electrochemical gradient over the inner membrane that drives transmembrane transport and the ATP synthase. Cytochrome c oxidase is the component of the respiratory chain that catalyzes the reduction of oxygen to water. Electrons originating from reduced cytochrome c in the intermembrane space (IMS) are transferred via the dinuclear copper A center (CU(A)) of subunit 2 and heme A of subunit 1 to the active site in subunit 1, a binuclear center (BNC) formed by heme A3 and copper B (CU(B)). The BNC reduces molecular oxygen to 2 water molecules using 4 electrons from cytochrome c in the IMS and 4 protons from the mitochondrial matrix. The sequence is that of Cytochrome c oxidase subunit 3 (MT-CO3) from Pelomedusa subrufa (African side-necked turtle).